We begin with the raw amino-acid sequence, 208 residues long: MQHLAVFGGTFDPIHWGHLLIAEAALQQIPIEKVIWVPSLNPPHKKASAFRHRLAMLQLATQDNPAFTVSSVEKNRSGVSYAINTLTDLSVCFPNTHWYWIVGLDTFQTLPRWYRGQELAPMCDWLIAPRLVGGENIAQSELICKQVKQQLRKQSDTIHWHLLHIPLVGVSSSLIRKLYRIGKSIRYLVPEDVRSYIAAHKLYSEDSE.

It belongs to the NadD family.

It catalyses the reaction nicotinate beta-D-ribonucleotide + ATP + H(+) = deamido-NAD(+) + diphosphate. It functions in the pathway cofactor biosynthesis; NAD(+) biosynthesis; deamido-NAD(+) from nicotinate D-ribonucleotide: step 1/1. Catalyzes the reversible adenylation of nicotinate mononucleotide (NaMN) to nicotinic acid adenine dinucleotide (NaAD). The sequence is that of Probable nicotinate-nucleotide adenylyltransferase from Nostoc sp. (strain PCC 7120 / SAG 25.82 / UTEX 2576).